The primary structure comprises 220 residues: dITP/XTP pyrophosphatase (220 aa).

13 to 18 (SHNAGK) serves as a coordination point for substrate. Positions 45 and 74 each coordinate Mg(2+). Asp74 functions as the Proton acceptor in the catalytic mechanism. Substrate is bound by residues Ser75, 163-166 (FGYD), Lys186, and 199-200 (HR).

Belongs to the HAM1 NTPase family. As to quaternary structure, homodimer. Requires Mg(2+) as cofactor.

It carries out the reaction XTP + H2O = XMP + diphosphate + H(+). The catalysed reaction is dITP + H2O = dIMP + diphosphate + H(+). The enzyme catalyses ITP + H2O = IMP + diphosphate + H(+). Functionally, pyrophosphatase that catalyzes the hydrolysis of nucleoside triphosphates to their monophosphate derivatives, with a high preference for the non-canonical purine nucleotides XTP (xanthosine triphosphate), dITP (deoxyinosine triphosphate) and ITP. Seems to function as a house-cleaning enzyme that removes non-canonical purine nucleotides from the nucleotide pool, thus preventing their incorporation into DNA/RNA and avoiding chromosomal lesions. This is dITP/XTP pyrophosphatase from Brucella melitensis biotype 1 (strain ATCC 23456 / CCUG 17765 / NCTC 10094 / 16M).